A 121-amino-acid polypeptide reads, in one-letter code: Large ribosomal subunit protein uL22 (121 aa).

The protein belongs to the universal ribosomal protein uL22 family. As to quaternary structure, part of the 50S ribosomal subunit.

This protein binds specifically to 23S rRNA; its binding is stimulated by other ribosomal proteins, e.g. L4, L17, and L20. It is important during the early stages of 50S assembly. It makes multiple contacts with different domains of the 23S rRNA in the assembled 50S subunit and ribosome. Functionally, the globular domain of the protein is located near the polypeptide exit tunnel on the outside of the subunit, while an extended beta-hairpin is found that lines the wall of the exit tunnel in the center of the 70S ribosome. This chain is Large ribosomal subunit protein uL22, found in Pseudarthrobacter chlorophenolicus (strain ATCC 700700 / DSM 12829 / CIP 107037 / JCM 12360 / KCTC 9906 / NCIMB 13794 / A6) (Arthrobacter chlorophenolicus).